A 247-amino-acid polypeptide reads, in one-letter code: 3,4-dihydroxy-2-butanone 4-phosphate synthase (247 aa).

D-ribulose 5-phosphate contacts are provided by residues 38–39, Asp43, 179–183, and Glu203; these read RE and RMGQT. Glu39 lines the Mg(2+) pocket.

This sequence belongs to the DHBP synthase family. Homodimer. Mg(2+) is required as a cofactor. Mn(2+) serves as cofactor.

The catalysed reaction is D-ribulose 5-phosphate = (2S)-2-hydroxy-3-oxobutyl phosphate + formate + H(+). Its pathway is cofactor biosynthesis; riboflavin biosynthesis; 2-hydroxy-3-oxobutyl phosphate from D-ribulose 5-phosphate: step 1/1. Functionally, catalyzes the conversion of D-ribulose 5-phosphate to formate and 3,4-dihydroxy-2-butanone 4-phosphate. This chain is 3,4-dihydroxy-2-butanone 4-phosphate synthase, found in Methanosarcina mazei (strain ATCC BAA-159 / DSM 3647 / Goe1 / Go1 / JCM 11833 / OCM 88) (Methanosarcina frisia).